We begin with the raw amino-acid sequence, 228 residues long: RNA pyrophosphohydrolase (228 aa).

Residues 1 to 70 (MEKRSGIGRL…KQWVKMMNDI (70 aa)) are unknown. The interval 71–228 (VIDKRGFRLG…VLTEFAEFIR (158 aa)) is rppH domain. The region spanning 76–221 (GFRLGVGMVI…KRDVYQKVLT (146 aa)) is the Nudix hydrolase domain. Residues 109–130 (GGLLPNETLREALNRELDEEVG) carry the Nudix box motif.

It in the C-terminal section; belongs to the Nudix hydrolase family. RppH subfamily. Requires a divalent metal cation as cofactor.

In terms of biological role, accelerates the degradation of transcripts by removing pyrophosphate from the 5'-end of triphosphorylated RNA, leading to a more labile monophosphorylated state that can stimulate subsequent ribonuclease cleavage. This is RNA pyrophosphohydrolase from Coxiella burnetii (strain RSA 493 / Nine Mile phase I).